The sequence spans 602 residues: Cytoskeleton-associated protein 4 (602 aa).

A disordered region spans residues 1–83 (MPSAKQRGSK…GGGGKSSSSS (83 aa)). Topologically, residues 1 to 106 (MPSAKQRGSK…SASCSRRLGR (106 aa)) are cytoplasmic. Residues S3, S17, and S19 each carry the phosphoserine modification. At K21 the chain carries N6-acetyllysine. Residues 35–52 (KPPPAPQQPPPPPAPHPQ) are compositionally biased toward pro residues. The segment covering 53–64 (QHPQQHPQNQAH) has biased composition (low complexity). A lipid anchor (S-palmitoyl cysteine; by ZDHHC2) is attached at C100. Residues 107 to 127 (ALNFLFYLALVAAAAFSGWCV) form a helical membrane-spanning segment. The Extracellular segment spans residues 128 to 602 (HHVLEEVQQV…VKVEKIHEKV (475 aa)). Residues 130–214 (VLEEVQQVRR…QKLQNEILKD (85 aa)) adopt a coiled-coil conformation. At S232 the chain carries Phosphoserine; by FAM20C. 2 coiled-coil regions span residues 256 to 460 (TEVQ…GLGS) and 533 to 602 (LSSL…HEKV). S312 carries the post-translational modification Phosphoserine.

Interacts with REEP5. In terms of processing, reversibly palmitoylated. Palmitoylation at Cys-100 by ZDHHC2 is required for its trafficking from the ER to the plasma membrane and for its perinuclear localization. Palmitoylation by ZDHHC2 is also required for its function in APF-mediated antiproliferative signaling. Increased phosphorylation during mitosis prevents binding to microtubules.

It is found in the endoplasmic reticulum membrane. The protein localises to the cell membrane. Its subcellular location is the cytoplasm. It localises to the cytoskeleton. The protein resides in the perinuclear region. In terms of biological role, mediates the anchoring of the endoplasmic reticulum to microtubules. Its function is as follows. High-affinity epithelial cell surface receptor for the FZD8-related low molecular weight sialoglycopeptide APF/antiproliferative factor. Mediates the APF antiproliferative signaling within cells. The chain is Cytoskeleton-associated protein 4 (CKAP4) from Homo sapiens (Human).